We begin with the raw amino-acid sequence, 371 residues long: Aspartate-semialdehyde dehydrogenase (371 aa).

Residues 10 to 13 (RGMV), 37 to 38 (TS), and Gln74 each bind NADP(+). Arg103 lines the phosphate pocket. Catalysis depends on Cys136, which acts as the Acyl-thioester intermediate. Gln163 contributes to the substrate binding site. Ser166 provides a ligand contact to NADP(+). A substrate-binding site is contributed by Glu243. Lys246 contacts phosphate. Position 270 (Arg270) interacts with substrate. His277 (proton acceptor) is an active-site residue. Gln353 lines the NADP(+) pocket.

It belongs to the aspartate-semialdehyde dehydrogenase family. In terms of assembly, homodimer.

It catalyses the reaction L-aspartate 4-semialdehyde + phosphate + NADP(+) = 4-phospho-L-aspartate + NADPH + H(+). The protein operates within amino-acid biosynthesis; L-lysine biosynthesis via DAP pathway; (S)-tetrahydrodipicolinate from L-aspartate: step 2/4. It functions in the pathway amino-acid biosynthesis; L-methionine biosynthesis via de novo pathway; L-homoserine from L-aspartate: step 2/3. It participates in amino-acid biosynthesis; L-threonine biosynthesis; L-threonine from L-aspartate: step 2/5. Functionally, catalyzes the NADPH-dependent formation of L-aspartate-semialdehyde (L-ASA) by the reductive dephosphorylation of L-aspartyl-4-phosphate. This is Aspartate-semialdehyde dehydrogenase from Haemophilus influenzae (strain ATCC 51907 / DSM 11121 / KW20 / Rd).